The sequence spans 330 residues: Malate dehydrogenase (330 aa).

12 to 18 (GAAGQIG) provides a ligand contact to NAD(+). Residues R93 and R99 each coordinate substrate. Residues N106, Q113, and 130 to 132 (VGN) contribute to the NAD(+) site. N132 and R163 together coordinate substrate. H188 acts as the Proton acceptor in catalysis.

Belongs to the LDH/MDH superfamily. MDH type 2 family.

It catalyses the reaction (S)-malate + NAD(+) = oxaloacetate + NADH + H(+). In terms of biological role, catalyzes the reversible oxidation of malate to oxaloacetate. This chain is Malate dehydrogenase, found in Thermobifida fusca (strain YX).